Consider the following 70-residue polypeptide: Cytochrome c oxidase subunit 8B, mitochondrial (70 aa).

Residues 1-24 (MSRLAPPLRLLQAPLKCWAVPKAH) constitute a mitochondrion transit peptide. Over 25–35 (VSAKPARTPTS) the chain is Mitochondrial matrix. Residues 36–59 (PMEQAVGLSVMFVSFLVPSGWVLS) traverse the membrane as a helical segment. Over 60–70 (HLESYKKSSTT) the chain is Mitochondrial intermembrane.

The protein belongs to the cytochrome c oxidase VIII family. Component of the cytochrome c oxidase (complex IV, CIV), a multisubunit enzyme composed of 14 subunits. The complex is composed of a catalytic core of 3 subunits MT-CO1, MT-CO2 and MT-CO3, encoded in the mitochondrial DNA, and 11 supernumerary subunits COX4I, COX5A, COX5B, COX6A, COX6B, COX6C, COX7A, COX7B, COX7C, COX8 and NDUFA4, which are encoded in the nuclear genome. The complex exists as a monomer or a dimer and forms supercomplexes (SCs) in the inner mitochondrial membrane with NADH-ubiquinone oxidoreductase (complex I, CI) and ubiquinol-cytochrome c oxidoreductase (cytochrome b-c1 complex, complex III, CIII), resulting in different assemblies (supercomplex SCI(1)III(2)IV(1) and megacomplex MCI(2)III(2)IV(2)).

It localises to the mitochondrion inner membrane. It participates in energy metabolism; oxidative phosphorylation. In terms of biological role, component of the cytochrome c oxidase, the last enzyme in the mitochondrial electron transport chain which drives oxidative phosphorylation. The respiratory chain contains 3 multisubunit complexes succinate dehydrogenase (complex II, CII), ubiquinol-cytochrome c oxidoreductase (cytochrome b-c1 complex, complex III, CIII) and cytochrome c oxidase (complex IV, CIV), that cooperate to transfer electrons derived from NADH and succinate to molecular oxygen, creating an electrochemical gradient over the inner membrane that drives transmembrane transport and the ATP synthase. Cytochrome c oxidase is the component of the respiratory chain that catalyzes the reduction of oxygen to water. Electrons originating from reduced cytochrome c in the intermembrane space (IMS) are transferred via the dinuclear copper A center (CU(A)) of subunit 2 and heme A of subunit 1 to the active site in subunit 1, a binuclear center (BNC) formed by heme A3 and copper B (CU(B)). The BNC reduces molecular oxygen to 2 water molecules using 4 electrons from cytochrome c in the IMS and 4 protons from the mitochondrial matrix. The sequence is that of Cytochrome c oxidase subunit 8B, mitochondrial (COX8B) from Carlito syrichta (Philippine tarsier).